The chain runs to 113 residues: Ig kappa chain V-II region 26-10 (113 aa).

Residues 1–23 (DVVMTQTPLSLPVSLGDQASISC) form a framework-1 region. Residues cysteine 23 and cysteine 93 are joined by a disulfide bond. The complementarity-determining-1 stretch occupies residues 24-39 (RSSQSLVHSNGNTYLN). Residues 40–54 (WYLQKAGQSPKLLIY) are framework-2. Residues 55 to 61 (KVSNRFS) are complementarity-determining-2. The segment at 62–93 (GVPDRFSGSGSGTDFTLKISRVEAEDLGIYFC) is framework-3. The segment at 94–102 (SQTTHVPPT) is complementarity-determining-3. Positions 103 to 112 (FGGGTKLEIK) are framework-4.

This chain is Ig kappa chain V-II region 26-10, found in Mus musculus (Mouse).